Reading from the N-terminus, the 107-residue chain is UPF0145 protein BH1111 (107 aa).

Belongs to the UPF0145 family.

The sequence is that of UPF0145 protein BH1111 from Halalkalibacterium halodurans (strain ATCC BAA-125 / DSM 18197 / FERM 7344 / JCM 9153 / C-125) (Bacillus halodurans).